Consider the following 248-residue polypeptide: Sugar fermentation stimulation protein homolog (248 aa).

It belongs to the SfsA family.

The protein is Sugar fermentation stimulation protein homolog of Methylorubrum extorquens (strain PA1) (Methylobacterium extorquens).